The sequence spans 182 residues: ATP synthase subunit delta (182 aa).

It belongs to the ATPase delta chain family. F-type ATPases have 2 components, F(1) - the catalytic core - and F(0) - the membrane proton channel. F(1) has five subunits: alpha(3), beta(3), gamma(1), delta(1), epsilon(1). F(0) has three main subunits: a(1), b(2) and c(10-14). The alpha and beta chains form an alternating ring which encloses part of the gamma chain. F(1) is attached to F(0) by a central stalk formed by the gamma and epsilon chains, while a peripheral stalk is formed by the delta and b chains.

The protein resides in the cell inner membrane. Functionally, f(1)F(0) ATP synthase produces ATP from ADP in the presence of a proton or sodium gradient. F-type ATPases consist of two structural domains, F(1) containing the extramembraneous catalytic core and F(0) containing the membrane proton channel, linked together by a central stalk and a peripheral stalk. During catalysis, ATP synthesis in the catalytic domain of F(1) is coupled via a rotary mechanism of the central stalk subunits to proton translocation. This protein is part of the stalk that links CF(0) to CF(1). It either transmits conformational changes from CF(0) to CF(1) or is implicated in proton conduction. This Bdellovibrio bacteriovorus (strain ATCC 15356 / DSM 50701 / NCIMB 9529 / HD100) protein is ATP synthase subunit delta.